The primary structure comprises 175 residues: Gamma-crystallin B (175 aa).

Beta/gamma crystallin 'Greek key' domains are found at residues 2 to 40 (GKIT…RVDS) and 41 to 83 (GCWM…RLIP). Residues 84 to 88 (QHSGT) are connecting peptide. Beta/gamma crystallin 'Greek key' domains lie at 89–129 (FRMR…NVLD) and 130–172 (GCWV…RRVM).

The protein belongs to the beta/gamma-crystallin family. As to quaternary structure, monomer.

In terms of biological role, crystallins are the dominant structural components of the vertebrate eye lens. This chain is Gamma-crystallin B (CRYGB), found in Canis lupus familiaris (Dog).